Consider the following 201-residue polypeptide: dTTP/UTP pyrophosphatase (201 aa).

The active-site Proton acceptor is the aspartate 76.

This sequence belongs to the Maf family. YhdE subfamily. A divalent metal cation serves as cofactor.

The protein localises to the cytoplasm. The catalysed reaction is dTTP + H2O = dTMP + diphosphate + H(+). It catalyses the reaction UTP + H2O = UMP + diphosphate + H(+). Its function is as follows. Nucleoside triphosphate pyrophosphatase that hydrolyzes dTTP and UTP. May have a dual role in cell division arrest and in preventing the incorporation of modified nucleotides into cellular nucleic acids. The sequence is that of dTTP/UTP pyrophosphatase from Neisseria meningitidis serogroup A / serotype 4A (strain DSM 15465 / Z2491).